We begin with the raw amino-acid sequence, 963 residues long: Protocadherin alpha-C1 (963 aa).

An N-terminal signal peptide occupies residues 1 to 18 (MVGWGVAVLCLWVSCGAA). Cadherin domains follow at residues 19-124 (AGQL…SPLF), 125-233 (PAGD…APVF), 234-340 (ERSV…APEL), 349-445 (VPED…TPSF), and 446-555 (PQPQ…YPVI). At 19-683 (AGQLEYSVPE…GGQLSAQNLY (665 aa)) the chain is on the extracellular side. N-linked (GlcNAc...) asparagine glycosylation is present at asparagine 38. Asparagine 248 and asparagine 274 each carry an N-linked (GlcNAc...) asparagine glycan. An N-linked (GlcNAc...) asparagine glycan is attached at asparagine 562. The Cadherin 6 domain occupies 570 to 667 (VPRSARTGHL…NSVPQLLPDF (98 aa)). Residues 684–704 (LVIALACISFLFLGCLLFFVC) form a helical membrane-spanning segment. Over 705–963 (TKLHQSPGCC…GNSTTDNSDQ (259 aa)) the chain is Cytoplasmic. 4 PXXP repeats span residues 812–815 (PRQP), 845–848 (PGGP), 886–889 (PGNP), and 904–907 (PGSP). A 4 X 4 AA repeats of P-X-X-P region spans residues 812–907 (PRQPNPDWRY…PDKFIIPGSP (96 aa)). Positions 844–902 (GPGGPDQQWPTVSSATPEPEAGEVSPPVGAGVNSNSWTFKYGPGNPKQSGPGELPDKFI) are disordered. A disordered region spans residues 914-963 (QEPANSQIDKSDFITFGKKEETKKKKKKKKGNKTQEKKEKGNSTTDNSDQ). A compositionally biased stretch (basic and acidic residues) spans 922 to 936 (DKSDFITFGKKEETK).

It localises to the cell membrane. Potential calcium-dependent cell-adhesion protein. May be involved in the establishment and maintenance of specific neuronal connections in the brain. This is Protocadherin alpha-C1 (PCDHAC1) from Pan troglodytes (Chimpanzee).